Here is a 144-residue protein sequence, read N- to C-terminus: 6-pyruvoyl tetrahydrobiopterin synthase (144 aa).

Serine 18 is subject to Phosphoserine. Residue histidine 23 participates in Zn(2+) binding. Residue serine 27 is modified to Phosphoserine. Cysteine 42 serves as the catalytic Proton acceptor. Residues histidine 48 and histidine 50 each contribute to the Zn(2+) site. Residue histidine 89 is the Charge relay system of the active site. Tyrosine 127 carries the post-translational modification Phosphotyrosine. The Charge relay system role is filled by glutamate 133.

Belongs to the PTPS family. Homodimer. Homohexamer formed of two homotrimers in a head to head fashion. Zn(2+) serves as cofactor. In terms of processing, phosphorylation of Ser-18 is required for maximal enzyme activity.

The enzyme catalyses 7,8-dihydroneopterin 3'-triphosphate = 6-pyruvoyl-5,6,7,8-tetrahydropterin + triphosphate + H(+). It participates in cofactor biosynthesis; tetrahydrobiopterin biosynthesis; tetrahydrobiopterin from 7,8-dihydroneopterin triphosphate: step 1/3. Functionally, involved in the biosynthesis of tetrahydrobiopterin, an essential cofactor of aromatic amino acid hydroxylases. Catalyzes the transformation of 7,8-dihydroneopterin triphosphate into 6-pyruvoyl tetrahydropterin. The protein is 6-pyruvoyl tetrahydrobiopterin synthase of Mus musculus (Mouse).